The primary structure comprises 600 residues: Putative acetyltransferase MPN_114 (600 aa).

Residue histidine 323 is the Proton acceptor of the active site. 396 to 409 (TKPLIKAKGIKNSE) lines the CoA pocket.

The protein belongs to the carnitine/choline acetyltransferase family.

This chain is Putative acetyltransferase MPN_114, found in Mycoplasma pneumoniae (strain ATCC 29342 / M129 / Subtype 1) (Mycoplasmoides pneumoniae).